The chain runs to 386 residues: Putative gustatory receptor 22b (386 aa).

Residues 1–48 (MFGSSREIRPYLARQMLKTTLYGSWLLGIFPFTLDSGKRIRQLRRSRC) lie on the Cytoplasmic side of the membrane. A helical transmembrane segment spans residues 49–69 (LTLYGLVLNYFLIFTLIRLAF). The Extracellular segment spans residues 70–89 (EYRKHKLEAFKRNPVLEMIN). A helical transmembrane segment spans residues 90–110 (VVIGIINVLSALIVHFMNFWG). The Cytoplasmic segment spans residues 111-155 (SRKVGEICNELLILEYQDFEGLNGRNCPNFNCFVIQKCLTILGQL). Residues 156–176 (LSFFTLNFALPGLEFHICLVL) form a helical membrane-spanning segment. Topologically, residues 177-178 (LS) are extracellular. The helical transmembrane segment at 179-199 (CLMEFSLNLNIMHYHVGVLLI) threads the bilayer. Over 200 to 254 (YRYVWLINEQLKDLVSQLKLNPETDFSRIHQFLSLYKRLLELNRKLVIAYEYQMT) the chain is Cytoplasmic. The chain crosses the membrane as a helical span at residues 255-275 (LFIIAQLSGNIVVIYFLIVYG). Over 276–282 (LSMRTYS) the chain is Extracellular. Residues 283-303 (IFLVAFPNSLLINIWDFWLCI) form a helical membrane-spanning segment. The Cytoplasmic segment spans residues 304–363 (AACDLTEKAGDETAIILKIFSDLEHRDDKLEMSVNEFAWLCSHRKFRFQLCGLFSMNCRM). A helical transmembrane segment spans residues 364 to 384 (GFKMIITTFLYLVYLVQFDYM). Topologically, residues 385-386 (NL) are extracellular.

It belongs to the insect chemoreceptor superfamily. Gustatory receptor (GR) family. Gr22e subfamily. As to expression, expressed in taste bristles in the foreleg and labial palps. In larvae, is expressed in neurons of the dorsal and posterior pharyngeal sense organs. Expressed in taste neurons that mediate sensitivity to bitter compounds.

The protein resides in the cell membrane. Functionally, probable gustatory receptor which mediates acceptance or avoidance behavior, depending on its substrates. Seems to be involved in the sensing of bitter taste since it is expressed in neurons that mediate sensitivity to bitter compounds. This is Putative gustatory receptor 22b from Drosophila melanogaster (Fruit fly).